A 426-amino-acid polypeptide reads, in one-letter code: Interferon regulatory factor 8 (426 aa).

Positions 7–114 (GRRLRQWLIE…EPYKVYRIVP (108 aa)) form a DNA-binding region, IRF tryptophan pentad repeat.

It belongs to the IRF family. As to quaternary structure, interacts (via C-terminus) with TRIM21 (via C-terminus). Interacts with the BATF-JUNB heterodimer. Interacts with BATF (via bZIP domain); the interaction is direct. Interacts with COPS2. Interacts with SPI1. Post-translationally, ubiquitinated. Ubiquitination by TRIM21 in macrophages, a process that is strongly increased upon interferon gamma stimulation, leds to the enhanced transcriptional activity of target cytokine genes. Ubiquitination leads to its degradation by the proteasome. In terms of processing, sumoylated with SUMO3. Desumoylated by SENP1. In terms of tissue distribution, predominantly expressed in lymphoid tissues.

It is found in the nucleus. It localises to the cytoplasm. Its function is as follows. Transcription factor that specifically binds to the upstream regulatory region of type I interferon (IFN) and IFN-inducible MHC class I genes (the interferon consensus sequence (ICS)). Can both act as a transcriptional activator or repressor. Plays a negative regulatory role in cells of the immune system. Involved in CD8(+) dendritic cell differentiation by forming a complex with the BATF-JUNB heterodimer in immune cells, leading to recognition of AICE sequence (5'-TGAnTCA/GAAA-3'), an immune-specific regulatory element, followed by cooperative binding of BATF and IRF8 and activation of genes. Required for the development of plasmacytoid dendritic cells (pDCs), which produce most of the type I IFN in response to viral infection. Positively regulates macroautophagy in dendritic cells. Acts as a transcriptional repressor of osteoclast differentiation factors such as NFATC1 and EEIG1. In Homo sapiens (Human), this protein is Interferon regulatory factor 8.